The following is a 316-amino-acid chain: tRNA dimethylallyltransferase (316 aa).

An ATP-binding site is contributed by 13-20; the sequence is GPTAVGKT. 15–20 contributes to the substrate binding site; sequence TAVGKT. The segment at 38–41 is interaction with substrate tRNA; that stretch reads DSIQ.

This sequence belongs to the IPP transferase family. As to quaternary structure, monomer. Mg(2+) serves as cofactor.

The catalysed reaction is adenosine(37) in tRNA + dimethylallyl diphosphate = N(6)-dimethylallyladenosine(37) in tRNA + diphosphate. Functionally, catalyzes the transfer of a dimethylallyl group onto the adenine at position 37 in tRNAs that read codons beginning with uridine, leading to the formation of N6-(dimethylallyl)adenosine (i(6)A). This chain is tRNA dimethylallyltransferase, found in Staphylococcus carnosus (strain TM300).